Consider the following 80-residue polypeptide: Small ribosomal subunit protein uS17c (80 aa).

It belongs to the universal ribosomal protein uS17 family. As to quaternary structure, part of the 30S ribosomal subunit.

The protein localises to the plastid. Its subcellular location is the chloroplast. One of the primary rRNA binding proteins, it binds specifically to the 5'-end of 16S ribosomal RNA. This chain is Small ribosomal subunit protein uS17c (rps17), found in Gracilaria tenuistipitata var. liui (Red alga).